The following is a 912-amino-acid chain: Receptor protein kinase WSS1 (912 aa).

The N-terminal stretch at 1–27 (MGRDARRLPLLPFLLLLLAAAAGVAES) is a signal peptide. The Extracellular portion of the chain corresponds to 28 to 477 (ATDAEAIHDL…AGGGKSKPNT (450 aa)). LRR repeat units lie at residues 64–88 (AGKVTELNLADRGLSGTLPDSLSSL), 89–111 (TSLTALQLQGNALTGAVPSLARM), and 112–134 (GSLARLALDGNAFTSLPPDFLHG). 9 N-linked (GlcNAc...) asparagine glycosylation sites follow: N159, N170, N196, N256, N286, N371, N376, N387, and N400. LRR repeat units follow at residues 184–208 (LVSLRNLRLSYNNLTGGLPPELSSL), 235–261 (MKSLKLLWIQSNKFTGPIPDLNGTQLE), 281–303 (LMSLKNVSLSNNNFQGPKPAFAA), 364–388 (SSDVSMINLSRKNLSGRISPALANL), 389–411 (TRLARLDLSNNNLTGVIPDVLTT), and 413–438 (PSLTVLNVANNRLTGEVPKFKPSVNV). The segment at 448 to 472 (SSGSSGGGGGSDGDSSSSDSAGGGK) is disordered. Residues 478–498 (GMIIGIIVAVIILFACIALLV) traverse the membrane as a helical segment. The Cytoplasmic portion of the chain corresponds to 499–912 (HHRKKKNVEK…SFNVPRKYNG (414 aa)). In terms of domain architecture, Protein kinase spans 580 to 859 (FSEDCILGRG…HCVNRLSSLV (280 aa)). Residues 586-594 (LGRGGFGVV) and K607 contribute to the ATP site. The active-site Proton acceptor is D708.

This sequence belongs to the protein kinase superfamily. Ser/Thr protein kinase family. The cofactor is Mn(2+). In terms of tissue distribution, expressed in young and mature leaves.

The protein localises to the cell membrane. The enzyme catalyses L-seryl-[protein] + ATP = O-phospho-L-seryl-[protein] + ADP + H(+). It catalyses the reaction L-threonyl-[protein] + ATP = O-phospho-L-threonyl-[protein] + ADP + H(+). In terms of biological role, transmembrane kinase receptor involved in the regulation of reactive oxygen species (ROS) homeostasis, chloroplast development and leaf senescence. This Oryza sativa subsp. japonica (Rice) protein is Receptor protein kinase WSS1.